Consider the following 227-residue polypeptide: ATP-dependent dethiobiotin synthetase BioD (227 aa).

12 to 17 provides a ligand contact to ATP; sequence DVGKTV. Residue threonine 16 coordinates Mg(2+). Lysine 37 is a catalytic residue. Threonine 41 lines the substrate pocket. ATP-binding positions include aspartate 50, 110 to 113, 171 to 172, and 201 to 203; these read EGAG, GS, and PAG. Residues aspartate 50 and glutamate 110 each coordinate Mg(2+).

This sequence belongs to the dethiobiotin synthetase family. Homodimer. Mg(2+) is required as a cofactor.

The protein resides in the cytoplasm. It catalyses the reaction (7R,8S)-7,8-diammoniononanoate + CO2 + ATP = (4R,5S)-dethiobiotin + ADP + phosphate + 3 H(+). It participates in cofactor biosynthesis; biotin biosynthesis; biotin from 7,8-diaminononanoate: step 1/2. Catalyzes a mechanistically unusual reaction, the ATP-dependent insertion of CO2 between the N7 and N8 nitrogen atoms of 7,8-diaminopelargonic acid (DAPA, also called 7,8-diammoniononanoate) to form a ureido ring. This is ATP-dependent dethiobiotin synthetase BioD from Rhodococcus erythropolis (strain PR4 / NBRC 100887).